Here is a 253-residue protein sequence, read N- to C-terminus: Triosephosphate isomerase (253 aa).

A substrate-binding site is contributed by 9 to 11; sequence NWK. His97 serves as the catalytic Electrophile. The active-site Proton acceptor is the Glu169. Residues Gly175, Ser215, and 236–237 contribute to the substrate site; that span reads GG.

This sequence belongs to the triosephosphate isomerase family. As to quaternary structure, homodimer.

The protein localises to the cytoplasm. It catalyses the reaction D-glyceraldehyde 3-phosphate = dihydroxyacetone phosphate. It participates in carbohydrate biosynthesis; gluconeogenesis. It functions in the pathway carbohydrate degradation; glycolysis; D-glyceraldehyde 3-phosphate from glycerone phosphate: step 1/1. Involved in the gluconeogenesis. Catalyzes stereospecifically the conversion of dihydroxyacetone phosphate (DHAP) to D-glyceraldehyde-3-phosphate (G3P). In Staphylococcus aureus (strain Mu50 / ATCC 700699), this protein is Triosephosphate isomerase.